Here is a 436-residue protein sequence, read N- to C-terminus: Acetyl-CoA decarbonylase/synthase complex subunit delta 1 (436 aa).

Belongs to the CdhD family. As to quaternary structure, heterodimer of delta and gamma chains. The ACDS complex is made up of alpha, epsilon, beta, gamma and delta chains with a probable stoichiometry of (alpha(2)epsilon(2))(4)-beta(8)-(gamma(1)delta(1))(8) (Potential).

The protein operates within one-carbon metabolism; methanogenesis from acetate. Part of a complex that catalyzes the reversible cleavage of acetyl-CoA, allowing growth on acetate as sole source of carbon and energy. Probably maintains the overall quaternary structure of the ACDS complex. The chain is Acetyl-CoA decarbonylase/synthase complex subunit delta 1 (cdhD1) from Methanosarcina acetivorans (strain ATCC 35395 / DSM 2834 / JCM 12185 / C2A).